The chain runs to 305 residues: Olfactory receptor 9G9 (305 aa).

Residues 1 to 27 (MQRSNHTVTEFILLGFTTDPGMQLGLF) lie on the Extracellular side of the membrane. Asn5 is a glycosylation site (N-linked (GlcNAc...) asparagine). Residues 28–48 (VVFLGVYSLTVVGNSTLIVLI) form a helical membrane-spanning segment. The Cytoplasmic segment spans residues 49-64 (CNDSHLHTPMYFVVGN). Residues 65-85 (LSFLDLWYSSVYTPKILVICI) traverse the membrane as a helical segment. Topologically, residues 86–96 (SEDKSISFAGC) are extracellular. The cysteines at positions 96 and 178 are disulfide-linked. A helical membrane pass occupies residues 97-117 (LCQFFFSAGLAYSECCLLAAM). Residues 118 to 138 (AYDRYVAISKPLLYAQAMSIK) lie on the Cytoplasmic side of the membrane. Residues 139 to 159 (LCALLVAVSYCGGFINSSIIT) traverse the membrane as a helical segment. At 160–200 (KKTFSFNFCCENIIDDFFCDLLPLVKLACGEKGCYKFLMYF) the chain is on the extracellular side. The chain crosses the membrane as a helical span at residues 201–221 (LLASNVICPAVLILASYLFII). The Cytoplasmic portion of the chain corresponds to 222–239 (TSVLRISSSQGRLKAFST). A helical membrane pass occupies residues 240–260 (CSSHLTSVTLYYGSILYIYAL). Topologically, residues 261 to 271 (PRSSYSFDMDK) are extracellular. A helical membrane pass occupies residues 272–291 (IVSTFYTEVLPMLNPMIYSL). Topologically, residues 292–305 (RNKDVKEALKKLLP) are cytoplasmic.

The protein belongs to the G-protein coupled receptor 1 family.

The protein resides in the cell membrane. In terms of biological role, odorant receptor. This chain is Olfactory receptor 9G9 (OR9G9), found in Homo sapiens (Human).